The sequence spans 159 residues: Ribosomal RNA large subunit methyltransferase H (159 aa).

Residues leucine 76, glycine 108, and 127-132 (FSPMTF) each bind S-adenosyl-L-methionine.

Belongs to the RNA methyltransferase RlmH family. In terms of assembly, homodimer.

The protein resides in the cytoplasm. It catalyses the reaction pseudouridine(1915) in 23S rRNA + S-adenosyl-L-methionine = N(3)-methylpseudouridine(1915) in 23S rRNA + S-adenosyl-L-homocysteine + H(+). Functionally, specifically methylates the pseudouridine at position 1915 (m3Psi1915) in 23S rRNA. This chain is Ribosomal RNA large subunit methyltransferase H, found in Alkaliphilus metalliredigens (strain QYMF).